The chain runs to 424 residues: Phosphomethylpyrimidine synthase (424 aa).

Substrate-binding positions include Met-94, Tyr-123, His-162, 184-186, 225-228, and Glu-264; these read SRG and NGMR. His-268 is a Zn(2+) binding site. Tyr-291 lines the substrate pocket. His-332 is a Zn(2+) binding site. 3 residues coordinate [4Fe-4S] cluster: Cys-406, Cys-409, and Cys-413.

This sequence belongs to the ThiC family. It depends on [4Fe-4S] cluster as a cofactor.

It catalyses the reaction 5-amino-1-(5-phospho-beta-D-ribosyl)imidazole + S-adenosyl-L-methionine = 4-amino-2-methyl-5-(phosphooxymethyl)pyrimidine + CO + 5'-deoxyadenosine + formate + L-methionine + 3 H(+). It functions in the pathway cofactor biosynthesis; thiamine diphosphate biosynthesis. In terms of biological role, catalyzes the synthesis of the hydroxymethylpyrimidine phosphate (HMP-P) moiety of thiamine from aminoimidazole ribotide (AIR) in a radical S-adenosyl-L-methionine (SAM)-dependent reaction. This Methanoculleus marisnigri (strain ATCC 35101 / DSM 1498 / JR1) protein is Phosphomethylpyrimidine synthase.